The sequence spans 271 residues: Nus factor SuhB (271 aa).

Residues E67, D86, and L88 each coordinate Mg(2+). E67 contributes to the substrate binding site. Residues 88-91, R187, and D216 contribute to the substrate site; that span reads LDGT.

Belongs to the inositol monophosphatase superfamily. Homodimer. The rRNA transcription and antitermination complex (rrnTAC) consists of RNA polymerase (RNAP), NusA, NusB, NusE (rpsJ), NusG, SubB, ribosomal protein S4, DNA and precursor rRNA; S4 is more flexible than other subunits. Interacts with the ribosome and with RNA polymerase. Mg(2+) serves as cofactor.

The protein resides in the cytoplasm. The enzyme catalyses a myo-inositol phosphate + H2O = myo-inositol + phosphate. Its function is as follows. Part of the processive rRNA transcription and antitermination complex (rrnTAC). The complex forms an RNA-chaperone ring around the RNA exit tunnel of RNA polymerase (RNAP). It supports rapid transcription and antitermination of rRNA operons, cotranscriptional rRNA folding, and annealing of distal rRNA regions to allow correct ribosome biogenesis. This subunit may play a central role in organizing the structure. A ribosome-associated protein, deletion of which alters the expression of 494 genes, suggesting a role in global gene regulation. Involved in control of pathogenesis-related genes. Required for the activation of virulence factors associated with acute infections (type 3 secretion system, T3SS) while suppressing virulence factors associated with chronic infections (biofilm formation and type 6 secretion system, T6SS). It probably acts at a post-transcriptional level. The protein is Nus factor SuhB of Pseudomonas aeruginosa (strain ATCC 15692 / DSM 22644 / CIP 104116 / JCM 14847 / LMG 12228 / 1C / PRS 101 / PAO1).